The following is a 158-amino-acid chain: MQGRSSAWLVKHELVHRSLGFDYQGIETLQIKPEDWYSIAVISYVYGYNYLRSQCAYDVAPGGLLASVYHLTKIEYGVDQPEEVCIKVFAPRRNPRIPSVFWIWKSADFQERESYDMLGISYENHPRLKRILMPESWIGWPLRKDYIAPNFYEIQDAY.

This sequence belongs to the complex I 30 kDa subunit family. In terms of assembly, NDH is composed of at least 16 different subunits, 5 of which are encoded in the nucleus.

The protein localises to the plastid. It is found in the chloroplast thylakoid membrane. It carries out the reaction a plastoquinone + NADH + (n+1) H(+)(in) = a plastoquinol + NAD(+) + n H(+)(out). The catalysed reaction is a plastoquinone + NADPH + (n+1) H(+)(in) = a plastoquinol + NADP(+) + n H(+)(out). Functionally, NDH shuttles electrons from NAD(P)H:plastoquinone, via FMN and iron-sulfur (Fe-S) centers, to quinones in the photosynthetic chain and possibly in a chloroplast respiratory chain. The immediate electron acceptor for the enzyme in this species is believed to be plastoquinone. Couples the redox reaction to proton translocation, and thus conserves the redox energy in a proton gradient. The polypeptide is NAD(P)H-quinone oxidoreductase subunit J, chloroplastic (Liriodendron tulipifera (Tuliptree)).